The primary structure comprises 259 residues: Zinc import ATP-binding protein ZnuC (259 aa).

One can recognise an ABC transporter domain in the interval 6 to 223 (VTVQSVSVTL…PAYHELFGPG (218 aa)). 38 to 45 (GPNGAGKS) is an ATP binding site. Positions 230 to 259 (ALYTHDHDHDHDLHGNATHSHDHNGPCNHD) are disordered. Positions 233-259 (THDHDHDHDLHGNATHSHDHNGPCNHD) are enriched in basic and acidic residues.

Belongs to the ABC transporter superfamily. Zinc importer (TC 3.A.1.15.5) family. The complex is composed of two ATP-binding proteins (ZnuC), two transmembrane proteins (ZnuB) and a solute-binding protein (ZnuA).

Its subcellular location is the cell inner membrane. It carries out the reaction Zn(2+)(out) + ATP(in) + H2O(in) = Zn(2+)(in) + ADP(in) + phosphate(in) + H(+)(in). Part of the ABC transporter complex ZnuABC involved in zinc import. Responsible for energy coupling to the transport system. The sequence is that of Zinc import ATP-binding protein ZnuC from Alcanivorax borkumensis (strain ATCC 700651 / DSM 11573 / NCIMB 13689 / SK2).